The chain runs to 1430 residues: Death-associated protein kinase 1 (1430 aa).

One can recognise a Protein kinase domain in the interval 13-275 (YDTGEELGSG…IQDSLQHPWI (263 aa)). Residues 19–27 (LGSGQFAVV), lysine 42, 94–96 (ELV), and glutamate 100 each bind ATP. The active-site Proton acceptor is the aspartate 139. Position 161 (aspartate 161) interacts with ATP. Residues 267-334 (QDSLQHPWIK…RSNMSVARSD (68 aa)) form a calmodulin-binding region. Phosphoserine; by RPS6KA1 and RPS6KA3 is present on serine 289. Positions 292–301 (NMEKFKKFAA) are autoinhibitory domain. Serine 308 bears the Phosphoserine; by autocatalysis mark. Serine 319 and serine 333 each carry phosphoserine. 8 ANK repeats span residues 378–407 (HGTP…RIDV), 411–440 (GGSN…PLDV), 444–473 (SGEM…NPNI), 477–506 (EEET…NVNI), 510–539 (EGET…DLNA), 543–572 (DGHI…FVDY), 576–605 (HGNT…NLDI), and 609–638 (YGRT…SVEA). A Roc domain is found at 681 to 955 (TQNLQPRIKL…NHLQEIRSQI (275 aa)). Serine 734 carries the phosphoserine; by MAPK1 modification. One copy of the ANK 9 repeat lies at 875–904 (KLKNPLQVVLVATHADIMNVPRPAGGEFGY). A Phosphoserine modification is found at serine 1115. The ANK 10 repeat unit spans residues 1162-1196 (EGDADIRLWVNGCKLANRGAELLVLLVNHGQGIEV). Residues 1312–1396 (KLSRLLDPPD…DAADFLLKAS (85 aa)) enclose the Death domain.

Belongs to the protein kinase superfamily. CAMK Ser/Thr protein kinase family. DAP kinase subfamily. In terms of assembly, interacts with KLHL20. Interacts (via death domain) with MAPK1 and MAPK3. Interacts with MAP1B (via N-terminus). Interacts with PRKD1 in an oxidative stress-regulated manner. Interacts with PIN1, PDCD6, BECN1, TSC2 and STX1A. Interacts (via kinase domain) with DAPK3 (via kinase domain). Interacts with GRINB. Interacts (via death domain) with UNC5B (via death domain). Interacts with UNC5C (via death domain). Mg(2+) is required as a cofactor. Post-translationally, ubiquitinated by the BCR(KLHL20) E3 ubiquitin ligase complex, leading to its degradation by the proteasome. In terms of processing, removal of the C-terminal tail of isoform 2 (corresponding to amino acids 296-337 of isoform 2) by proteolytic cleavage stimulates maximally its membrane-blebbing function. In response to mitogenic stimulation (PMA or EGF), phosphorylated at Ser-289; phosphorylation suppresses DAPK1 pro-apoptotic function. Autophosphorylation at Ser-308 inhibits its catalytic activity. Phosphorylation at Ser-734 by MAPK1 increases its catalytic activity and promotes cytoplasmic retention of MAPK1. Endoplasmic-stress can cause dephosphorylation at Ser-308. Isoform 2 is expressed in normal intestinal tissue as well as in colorectal carcinomas.

Its subcellular location is the cytoplasm. It localises to the cytoskeleton. It carries out the reaction L-seryl-[protein] + ATP = O-phospho-L-seryl-[protein] + ADP + H(+). It catalyses the reaction L-threonyl-[protein] + ATP = O-phospho-L-threonyl-[protein] + ADP + H(+). Activated by Ca(2+)/calmodulin. Regulated by a locking mechanism, involving autophosphorylation at Ser-308 and calmodulin binding. In the inactive state, Ser-308 is phosphorylated. Activation involves its dephosphorylation and a release-of-autoinhibition mechanism where binding of calmodulin induces a conformational change that relieves the steric block of the active site by the autoinhibitory domain. Activity is modulated by UNC5B and NTN1. UNC5B activates it by inhibiting the phosphorylation at Ser-308, whereas NTN1 inhibits UNC5B-mediated activation of DAPK1. Endoplasmic-stress activates by causing Ser-308 dephosphorylation. Functionally, calcium/calmodulin-dependent serine/threonine kinase involved in multiple cellular signaling pathways that trigger cell survival, apoptosis, and autophagy. Regulates both type I apoptotic and type II autophagic cell deaths signal, depending on the cellular setting. The former is caspase-dependent, while the latter is caspase-independent and is characterized by the accumulation of autophagic vesicles. Phosphorylates PIN1 resulting in inhibition of its catalytic activity, nuclear localization, and cellular function. Phosphorylates TPM1, enhancing stress fiber formation in endothelial cells. Phosphorylates STX1A and significantly decreases its binding to STXBP1. Phosphorylates PRKD1 and regulates JNK signaling by binding and activating PRKD1 under oxidative stress. Phosphorylates BECN1, reducing its interaction with BCL2 and BCL2L1 and promoting the induction of autophagy. Phosphorylates TSC2, disrupting the TSC1-TSC2 complex and stimulating mTORC1 activity in a growth factor-dependent pathway. Phosphorylates RPS6, MYL9 and DAPK3. Acts as a signaling amplifier of NMDA receptors at extrasynaptic sites for mediating brain damage in stroke. Cerebral ischemia recruits DAPK1 into the NMDA receptor complex and it phosphorylates GRINB at Ser-1303 inducing injurious Ca(2+) influx through NMDA receptor channels, resulting in an irreversible neuronal death. Required together with DAPK3 for phosphorylation of RPL13A upon interferon-gamma activation which is causing RPL13A involvement in transcript-selective translation inhibition. Its function is as follows. Isoform 2 cannot induce apoptosis but can induce membrane blebbing. The polypeptide is Death-associated protein kinase 1 (DAPK1) (Homo sapiens (Human)).